The following is a 335-amino-acid chain: Large ribosomal subunit protein uL10 (335 aa).

A disordered region spans residues 300–335 (QVSEQAAEKKEEKKEEEKKGPSEEEIGGGLSSLFGG). Basic and acidic residues predominate over residues 305–321 (AAEKKEEKKEEEKKGPS). The segment covering 326–335 (GGGLSSLFGG) has biased composition (gly residues).

The protein belongs to the universal ribosomal protein uL10 family. In terms of assembly, part of the 50S ribosomal subunit. Forms part of the ribosomal stalk which helps the ribosome interact with GTP-bound translation factors. Forms a heptameric L10(L12)2(L12)2(L12)2 complex, where L10 forms an elongated spine to which the L12 dimers bind in a sequential fashion.

Its function is as follows. Forms part of the ribosomal stalk, playing a central role in the interaction of the ribosome with GTP-bound translation factors. This chain is Large ribosomal subunit protein uL10, found in Sulfolobus acidocaldarius (strain ATCC 33909 / DSM 639 / JCM 8929 / NBRC 15157 / NCIMB 11770).